Here is a 338-residue protein sequence, read N- to C-terminus: Aspartate--ammonia ligase (338 aa).

This sequence belongs to the class-II aminoacyl-tRNA synthetase family. AsnA subfamily.

It localises to the cytoplasm. It carries out the reaction L-aspartate + NH4(+) + ATP = L-asparagine + AMP + diphosphate + H(+). Its pathway is amino-acid biosynthesis; L-asparagine biosynthesis; L-asparagine from L-aspartate (ammonia route): step 1/1. The chain is Aspartate--ammonia ligase from Lactobacillus delbrueckii subsp. bulgaricus (strain ATCC BAA-365 / Lb-18).